Consider the following 1469-residue polypeptide: Accumulation-associated protein (1469 aa).

The N-terminal stretch at 1-52 (MGKRRQGPINKKVDFLPNKLNKYSIRKFTVGTASILLGSTLIFGSSSHEAKA) is a signal peptide. Disordered regions lie at residues 52–164 (AAEE…SEPV), 486–511 (GIET…TPTT), and 528–1443 (EIKP…QANE). Composition is skewed to polar residues over residues 75 to 94 (ENTN…STLQ) and 110 to 125 (KANS…SEAP). Basic and acidic residues predominate over residues 129–144 (DLARKEDIPAVSKNEE). The span at 145 to 164 (LQSSQPNTDSKIEPTTSEPV) shows a compositional bias: polar residues. G5 domains follow at residues 446–528 (PKAV…GGEE), 574–656 (YGPV…GGEE), 702–784 (YGPV…GGEE), 830–912 (YGPV…GGEE), 958–1040 (YGPV…GGEE), 1086–1168 (YGPV…GGEQ), and 1211–1296 (VTKY…GPTK). Over residues 489–500 (TTTTPTYVNPNT) the composition is skewed to low complexity. Basic and acidic residues-rich tracts occupy residues 528-537 (EIKPGHKDEF) and 589-613 (PFDK…KGEP). The segment covering 614–629 (GTKTITTPTTKNPLTG) has biased composition (low complexity). 2 stretches are compositionally biased toward basic and acidic residues: residues 631-646 (KVGE…KQPV) and 655-665 (EEIKPGHKDEF). Low complexity predominate over residues 738–757 (KGEPGTKTITTPTTKNPLTG). Composition is skewed to basic and acidic residues over residues 759–793 (KVGE…KDEF) and 845–869 (PFDK…KGEP). A compositionally biased stretch (low complexity) spans 870–885 (GTKTITTPTTKNPLTG). Residues 887-921 (KVGEGEPTEKVTKQPVDEIVHYGGEEIKPGHKDEF) are compositionally biased toward basic and acidic residues. A compositionally biased stretch (low complexity) spans 994-1013 (KGEPGTKTITTPTTKNPLTG). Basic and acidic residues predominate over residues 1015 to 1049 (KVGEGEPTEKITKQPVDEIVHYGGEEIKPGHKDEF). Residues 1122–1141 (KGEPGTKTITTPTTKNPLTG) show a composition bias toward low complexity. 3 stretches are compositionally biased toward basic and acidic residues: residues 1143–1162 (KVGE…DEIV), 1229–1253 (PFDK…KGEP), and 1271–1286 (KVGE…KQPV). The span at 1409–1443 (TPTQSGAPEQPNRSMHSTDNKNQLPDTGENRQANE) shows a compositional bias: polar residues. The LPXTG sorting signal motif lies at 1432 to 1436 (LPDTG). T1435 carries the post-translational modification Pentaglycyl murein peptidoglycan amidated threonine. Residues 1436–1469 (GENRQANEGTLVGSLLAIVGSLFIFGRRKKGNEK) constitute a propeptide, removed by sortase.

The protein localises to the secreted. Its subcellular location is the cell wall. The chain is Accumulation-associated protein from Staphylococcus epidermidis (strain ATCC 12228 / FDA PCI 1200).